A 1224-amino-acid polypeptide reads, in one-letter code: MKVKKNLTCSVSTSSRTMSLLSQLEKINLDSVLGEADNARYVTAKILHLVQSQEKTKKEMTSKGSSAIEVILSTLENTRDPQTILNILSILIELVSVGGGRRASVLVTKGGTQILLQLLLNASKESPPNEELMVLLHTLLAKIGPKDKKIGMKARINGALNISLNLVKQNLQNHRLILPCLQVLRVYSTNSVNAVSLGKNGVVELMFKIIGPFSKKNTSLMKVALDTLAALLKSKTNARRAVDRGYVHMLLTIYVDWHRHDSRHRYMLIRKGVLQCIKSVTNIKLGRKAFIDANGMKILYNTSQECLAVRTLDPLVNTSSLIMRKCFPKNRLPLPTIKSAFHFQLPVIPASGPVAQMYNLPPDVDDVVDESDDNDDAETESEIETEDDKDQNFKNDDIETDINKLKPRQELGRPLEELKMYEQFFPELTENFQECDLVSKEPKPFVSNANLGGPIVVPTAGEEFSAETNPSVIGISLKEGNPLLTEEYNRRPAFLGLPKKDSIKASSLLQQNVQRNLLPSCQCLSQEIVTGLDRISLQNTSENDQYYATGCVIKKDNKTSLTPLACSKTCEHVSPCGSSLFEGSSVHLGKFCCTGVESEEEDSKSSSSGEQVVLEVSDVSPVHDCDLYIEMVKTTKSIPEYSEVAYPDYFGHIPPPFKEPILERPYGVQRTKISQDIERLIHQNDIIDRVVYDLDNSICSAPEEVDVLKFNSKFESGNLRKVIQIRKNEYDLILNSDINSNHYHQWFYFEVSGMKTGIGYRFNIINCEKSNSQFNYGMQPLMYSVQEALNSRPSWTRVGTDICYYKNHFSRSSIAAGGQKGKSYYTITFTVTFQHKDDVCYFAYHYPYTYSTLKMHLQKLESMHNPQQIYFRQDALCETLGGNICPIVTITAMPESNYYEHICQFRNRPYIFLSARVHPGETNASWVMKGTLEYLMSSNPSAQSLRESYIFKIIPMLNPDGVINGNHRCSLSGEDLNRQWQNPNPDLHPTIYHAKGLLQYLAAIKRLPLVYCDYHGHSRKKNVFMYGCSIKETMWHTNVNTASCDLMEDPGYRVLPKILSQTAPAFCMGSCSFVVEKSKESTARVVVWREIGVQRSYTMESTLCGCDQGKYKGLQIGTKELEEMGAKFCVGLLRLKRMASPLEYNLPSGLLDIENELIESSCKVTSPTTYVLDEDEPRFLEEVDYSAESNDDQDAELADNVGDYEANNQEDGLSDSDSTRILLS.

The interval 361–398 (PPDVDDVVDESDDNDDAETESEIETEDDKDQNFKNDDI) is disordered. Residues 363–389 (DVDDVVDESDDNDDAETESEIETEDDK) are compositionally biased toward acidic residues. The region spanning 846-1136 (YPYTYSTLKM…KFCVGLLRLK (291 aa)) is the Peptidase M14 domain. Residues His918, Glu921, and His1015 each coordinate Zn(2+). Catalysis depends on Glu1100, which acts as the Proton donor/acceptor. Over residues 1186-1197 (SAESNDDQDAEL) the composition is skewed to acidic residues. Positions 1186–1224 (SAESNDDQDAELADNVGDYEANNQEDGLSDSDSTRILLS) are disordered. Residues 1206-1224 (ANNQEDGLSDSDSTRILLS) show a composition bias toward polar residues.

It belongs to the peptidase M14 family. Requires Zn(2+) as cofactor.

Its subcellular location is the cytoplasm. It localises to the cytosol. The protein localises to the nucleus. The protein resides in the mitochondrion. The enzyme catalyses (L-glutamyl)(n+1)-gamma-L-glutamyl-L-glutamyl-[protein] + H2O = (L-glutamyl)(n)-gamma-L-glutamyl-L-glutamyl-[protein] + L-glutamate. The catalysed reaction is C-terminal L-alpha-aminoacyl-L-glutamyl-L-glutamyl-[tubulin] + H2O = C-terminal L-alpha-aminoacyl-L-glutamyl-[tubulin] + L-glutamate. Its function is as follows. Metallocarboxypeptidase that mediates protein deglutamylation of tubulin and non-tubulin target proteins. Catalyzes the removal of polyglutamate side chains present on the gamma-carboxyl group of glutamate residues within the C-terminal tail of alpha- and beta-tubulin. Specifically cleaves tubulin long-side-chains, while it is not able to remove the branching point glutamate. Also catalyzes the removal of polyglutamate residues from the carboxy-terminus of alpha-tubulin as well as non-tubulin proteins. The sequence is that of Cytosolic carboxypeptidase 1 (AGTPBP1) from Gallus gallus (Chicken).